A 302-amino-acid polypeptide reads, in one-letter code: RNA polymerase sigma factor RpoH (302 aa).

The interval 57–126 (LVTSHLRLVA…IQEYILRSWS (70 aa)) is sigma-70 factor domain-2. The short motif at 81–84 (ELIS) is the Interaction with polymerase core subunit RpoC element. A sigma-70 factor domain-4 region spans residues 235 to 286 (AMDKLNDREKHILTERRLSDNPKTLEELSQVYGVSRERVRQIEVRAFDKLQK). The segment at residues 259 to 278 (LEELSQVYGVSRERVRQIEV) is a DNA-binding region (H-T-H motif).

The protein belongs to the sigma-70 factor family. RpoH subfamily. In terms of assembly, interacts with the RNA polymerase core enzyme.

Its subcellular location is the cytoplasm. Functionally, sigma factors are initiation factors that promote the attachment of RNA polymerase to specific initiation sites and are then released. This sigma factor is involved in regulation of expression of heat shock genes. This Zymomonas mobilis subsp. mobilis (strain ATCC 31821 / ZM4 / CP4) protein is RNA polymerase sigma factor RpoH.